Reading from the N-terminus, the 375-residue chain is Mitogen-activated protein kinase 1 (375 aa).

Residues 43–329 (RPPIMPIGRG…VEEALAHPYL (287 aa)) form the Protein kinase domain. Residues 49-57 (IGRGAYGIV) and lysine 72 each bind ATP. Catalysis depends on aspartate 169, which acts as the Proton acceptor. Position 201 is a phosphothreonine (threonine 201). The TXY motif lies at 201–203 (TEY). Phosphotyrosine is present on tyrosine 203. The residue at position 206 (threonine 206) is a Phosphothreonine.

Belongs to the protein kinase superfamily. CMGC Ser/Thr protein kinase family. MAP kinase subfamily. The cofactor is Mg(2+). Activated by wounding and UV-C in a cultivar-dependent manner; phosphorylated in cv. Pungchon but not in cv. Subicho.

The catalysed reaction is L-seryl-[protein] + ATP = O-phospho-L-seryl-[protein] + ADP + H(+). It catalyses the reaction L-threonyl-[protein] + ATP = O-phospho-L-threonyl-[protein] + ADP + H(+). Activated by threonine and tyrosine phosphorylation. Its function is as follows. Stress-inducible protein kinase involved in oxidative stress-mediated and innate immune MAP kinase signaling cascades. The sequence is that of Mitogen-activated protein kinase 1 from Capsicum annuum (Capsicum pepper).